Here is a 158-residue protein sequence, read N- to C-terminus: MGRSISVSFGLLAVFLSLSGTGAGLDCPPDSSPYRYFCYRVFKEQKNWADAERFCAERPNNGHLVSIESMEEAEFVAQLLSKITGKFITHFWIGLRIEDKKQQCRSEWSDGSSVSYDNLLKREFRKCFGLEKGTGYRSWFNLNCEEPYPFVCKVPPNC.

The N-terminal stretch at 1 to 23 (MGRSISVSFGLLAVFLSLSGTGA) is a signal peptide. 3 disulfides stabilise this stretch: cysteine 27-cysteine 38, cysteine 55-cysteine 152, and cysteine 127-cysteine 144. In terms of domain architecture, C-type lectin spans 34-153 (YRYFCYRVFK…CEEPYPFVCK (120 aa)).

Belongs to the snaclec family. In terms of assembly, heterotrimer; disulfide-linked. The heterotrimer consists of 1 heavy chain (a metalloproteinase) and 2 light chains: LC1 and LC2. As to expression, expressed by the venom gland.

The protein resides in the secreted. Its function is as follows. Regulatory subunit of the blood coagulation factor X-activating enzyme. Activates coagulation factor X (F10) by cleaving the Arg-Ile bond at position 234, activates coagulation factor IX (F9) by cleaving the Arg-Val bond at position 226 and is also able to activate protein C (PROC). May serve as an exosite by which the enzyme recognizes and binds to the Gla domain of factor X (F10) in a calcium-dependent manner. This is Snaclec coagulation factor X-activating enzyme light chain 2 (LC2) from Macrovipera lebetinus (Levantine viper).